The chain runs to 309 residues: Tagatose-6-phosphate kinase (309 aa).

This sequence belongs to the carbohydrate kinase PfkB family. LacC subfamily.

It carries out the reaction D-tagatofuranose 6-phosphate + ATP = D-tagatofuranose 1,6-bisphosphate + ADP + H(+). Its pathway is carbohydrate metabolism; D-tagatose 6-phosphate degradation; D-glyceraldehyde 3-phosphate and glycerone phosphate from D-tagatose 6-phosphate: step 1/2. This Streptococcus pyogenes serotype M12 (strain MGAS2096) protein is Tagatose-6-phosphate kinase.